Consider the following 100-residue polypeptide: Urease subunit gamma (100 aa).

Belongs to the urease gamma subunit family. In terms of assembly, heterotrimer of UreA (gamma), UreB (beta) and UreC (alpha) subunits. Three heterotrimers associate to form the active enzyme.

The protein resides in the cytoplasm. It carries out the reaction urea + 2 H2O + H(+) = hydrogencarbonate + 2 NH4(+). Its pathway is nitrogen metabolism; urea degradation; CO(2) and NH(3) from urea (urease route): step 1/1. This Prochlorococcus marinus (strain MIT 9215) protein is Urease subunit gamma.